The primary structure comprises 294 residues: Nucleotide-binding protein CLL_A3342 (294 aa).

ATP is bound at residue 8-15 (GLSGAGKT). GTP is bound at residue 59-62 (DIRG).

This sequence belongs to the RapZ-like family.

Displays ATPase and GTPase activities. In Clostridium botulinum (strain Eklund 17B / Type B), this protein is Nucleotide-binding protein CLL_A3342.